Here is a 262-residue protein sequence, read N- to C-terminus: Methionine-rich nacre protein (262 aa).

An N-terminal signal peptide occupies residues 1 to 22 (MSIMRRILCLAVVIFIINDVSS). Residues 26 to 35 (GNNKNWKKNG) are compositionally biased toward low complexity. Positions 26-84 (GNNKNWKKNGMSLSSPGNKKPTGNNAVPQKSKMNNMNQNSLSQPKRSSPPGNSMYNMAN) are disordered. The span at 36 to 84 (MSLSSPGNKKPTGNNAVPQKSKMNNMNQNSLSQPKRSSPPGNSMYNMAN) shows a compositional bias: polar residues.

As to expression, expressed in mantle and, after secretion, incorporated into acid-insoluble nacre matrix of the shell (at protein level). Expressed primarily in the mantle with highest level in the mantle pallium and lower level in the mantle edge.

The protein resides in the secreted. This chain is Methionine-rich nacre protein, found in Pinctada maxima (Silver-lipped pearl oyster).